The following is a 195-amino-acid chain: Shikimate kinase (195 aa).

26-31 contacts ATP; that stretch reads GSGKST. S30 lines the Mg(2+) pocket. Substrate contacts are provided by D48, R72, and G94. Residue R132 participates in ATP binding. R151 is a substrate binding site.

It belongs to the shikimate kinase family. Monomer. It depends on Mg(2+) as a cofactor.

It localises to the cytoplasm. It carries out the reaction shikimate + ATP = 3-phosphoshikimate + ADP + H(+). Its pathway is metabolic intermediate biosynthesis; chorismate biosynthesis; chorismate from D-erythrose 4-phosphate and phosphoenolpyruvate: step 5/7. Functionally, catalyzes the specific phosphorylation of the 3-hydroxyl group of shikimic acid using ATP as a cosubstrate. The chain is Shikimate kinase from Synechococcus sp. (strain RCC307).